The sequence spans 464 residues: A-type ATP synthase subunit B (464 aa).

The protein belongs to the ATPase alpha/beta chains family. As to quaternary structure, has multiple subunits with at least A(3), B(3), C, D, E, F, H, I and proteolipid K(x).

Its subcellular location is the cell membrane. In terms of biological role, component of the A-type ATP synthase that produces ATP from ADP in the presence of a proton gradient across the membrane. The B chain is a regulatory subunit. The chain is A-type ATP synthase subunit B from Methanococcus aeolicus (strain ATCC BAA-1280 / DSM 17508 / OCM 812 / Nankai-3).